Here is a 360-residue protein sequence, read N- to C-terminus: Protein Wnt-2 (360 aa).

The first 25 residues, 1-25 (MNAPLGGIWLGLPLLLTWLSPEVSS), serve as a signal peptide directing secretion. 11 disulfide bridges follow: Cys76-Cys87, Cys127-Cys135, Cys137-Cys157, Cys206-Cys220, Cys208-Cys215, Cys278-Cys309, Cys294-Cys304, Cys308-Cys348, Cys324-Cys339, Cys326-Cys336, and Cys331-Cys332. Ser212 carries O-palmitoleoyl serine; by PORCN lipidation. An N-linked (GlcNAc...) asparagine glycan is attached at Asn295.

Belongs to the Wnt family. In terms of processing, palmitoleoylation is required for efficient binding to frizzled receptors. Depalmitoleoylation leads to Wnt signaling pathway inhibition.

Its subcellular location is the secreted. It localises to the extracellular space. The protein localises to the extracellular matrix. Its function is as follows. Ligand for members of the frizzled family of seven transmembrane receptors. Probable developmental protein. May be a signaling molecule which affects the development of discrete regions of tissues. Is likely to signal over only few cell diameters. This chain is Protein Wnt-2 (WNT2), found in Oryctolagus cuniculus (Rabbit).